A 156-amino-acid polypeptide reads, in one-letter code: Cyanate hydratase (156 aa).

Residues R96, E99, and S122 contribute to the active site.

It belongs to the cyanase family.

The enzyme catalyses cyanate + hydrogencarbonate + 3 H(+) = NH4(+) + 2 CO2. In terms of biological role, catalyzes the reaction of cyanate with bicarbonate to produce ammonia and carbon dioxide. The sequence is that of Cyanate hydratase from Mycobacteroides abscessus (strain ATCC 19977 / DSM 44196 / CCUG 20993 / CIP 104536 / JCM 13569 / NCTC 13031 / TMC 1543 / L948) (Mycobacterium abscessus).